We begin with the raw amino-acid sequence, 375 residues long: Lipid-A-disaccharide synthase (375 aa).

It belongs to the LpxB family.

It carries out the reaction a lipid X + a UDP-2-N,3-O-bis[(3R)-3-hydroxyacyl]-alpha-D-glucosamine = a lipid A disaccharide + UDP + H(+). The protein operates within bacterial outer membrane biogenesis; LPS lipid A biosynthesis. Condensation of UDP-2,3-diacylglucosamine and 2,3-diacylglucosamine-1-phosphate to form lipid A disaccharide, a precursor of lipid A, a phosphorylated glycolipid that anchors the lipopolysaccharide to the outer membrane of the cell. The sequence is that of Lipid-A-disaccharide synthase from Pseudomonas entomophila (strain L48).